A 491-amino-acid polypeptide reads, in one-letter code: UDP-N-acetylmuramate--L-alanine ligase (491 aa).

An ATP-binding site is contributed by 126–132; the sequence is GTHGKTT.

This sequence belongs to the MurCDEF family.

The protein resides in the cytoplasm. It carries out the reaction UDP-N-acetyl-alpha-D-muramate + L-alanine + ATP = UDP-N-acetyl-alpha-D-muramoyl-L-alanine + ADP + phosphate + H(+). It participates in cell wall biogenesis; peptidoglycan biosynthesis. Its function is as follows. Cell wall formation. This is UDP-N-acetylmuramate--L-alanine ligase from Enterobacter sp. (strain 638).